Here is a 554-residue protein sequence, read N- to C-terminus: Glucose-6-phosphate isomerase (554 aa).

Glutamate 359 functions as the Proton donor in the catalytic mechanism. Catalysis depends on residues histidine 390 and lysine 518.

The protein belongs to the GPI family.

The protein resides in the cytoplasm. It carries out the reaction alpha-D-glucose 6-phosphate = beta-D-fructose 6-phosphate. Its pathway is carbohydrate biosynthesis; gluconeogenesis. It functions in the pathway carbohydrate degradation; glycolysis; D-glyceraldehyde 3-phosphate and glycerone phosphate from D-glucose: step 2/4. Catalyzes the reversible isomerization of glucose-6-phosphate to fructose-6-phosphate. This is Glucose-6-phosphate isomerase from Pseudomonas syringae pv. syringae (strain B728a).